Here is a 1002-residue protein sequence, read N- to C-terminus: BLOC-2 complex member HPS3 (1002 aa).

The interval glycine 218 to serine 239 is disordered.

Component of the biogenesis of lysosome-related organelles complex-2 (or BLOC2) composed of HPS3, HPS5 and HPS6. Interacts with HPS5 and HPS6. In terms of tissue distribution, found in heart, brain, spleen, liver, lung, kidney and testis.

It is found in the cytoplasm. The protein resides in the cytosol. In terms of biological role, involved in early stages of melanosome biogenesis and maturation. This chain is BLOC-2 complex member HPS3 (Hps3), found in Mus musculus (Mouse).